A 419-amino-acid polypeptide reads, in one-letter code: MFNRIISLFLLLFTGQVIALDLELTQGINSALPIAINSFGSNAAAQEIGNVIENDLTISGQFKIISGPQGANSQSSVSTLRQLGADSVVTGRVNQVGNRIEVSFTLADAVANGNILLTKTFQINANQVRALAHHISDEVYQKLTGERGIFSTRIAYISVQRNGGRSRYSLEVADADGHNPQSLLVSSEPIMSPSWSPNGKSISYVSFEKKKAEIFTVSVETGQRRLITSFPGINGAPAWSPDGQHLAVVLSKSGTPKIYDVDLSSGSMKQLTFGNSIDTEPRYSPDGRSLLFTSGRGGSPQVYRLSLADGQISRVTFEGNYNARASYTPDMKHIVMLHREDRQFNIGVQNTGGGPISNLTFSGLDESPSVSPNSRLVLYATRYQDRGVLGIVSIDGRIRMRLPAREGDVQEPAWSPYLS.

Residues methionine 1–alanine 19 form the signal peptide.

It belongs to the TolB family. The Tol-Pal system is composed of five core proteins: the inner membrane proteins TolA, TolQ and TolR, the periplasmic protein TolB and the outer membrane protein Pal. They form a network linking the inner and outer membranes and the peptidoglycan layer.

Its subcellular location is the periplasm. In terms of biological role, part of the Tol-Pal system, which plays a role in outer membrane invagination during cell division and is important for maintaining outer membrane integrity. The sequence is that of Tol-Pal system protein TolB from Legionella pneumophila subsp. pneumophila (strain Philadelphia 1 / ATCC 33152 / DSM 7513).